We begin with the raw amino-acid sequence, 335 residues long: MDERIISSETVDAEEVSFETSLRPQTLSQYIGQDKVKNNLTVFIEAATLRNEALDHVLLYGPPGLGKTTLAMVIASEMGSEIKTTSGPAIERPGDLATILTSLEPGDVLFIDEIHRLSRAIEEILYPAMEDYCLDIVIGTGPTARSVRLDLPPFTLIGATTRAGLLSAPLRDRFGVIDHLEFYTEEQLTEIVLRTSGILDTKIDDLGAREIARRSRGTPRIANRLLKRVRDFAQVRGNGTVTEKLAKEALTLLQVDPRGLDTIDQKLLHTIIQSFRGGPVGLDTIAASIGEERETIEDMQEPYLLQIGFLQRTPRGRIATETAYNHLGISYEKEV.

Positions Met-1–Tyr-183 are large ATPase domain (RuvB-L). ATP-binding positions include Leu-22, Arg-23, Gly-64, Lys-67, Thr-68, Thr-69, Glu-130–Tyr-132, Arg-173, Tyr-183, and Arg-220. Thr-68 is a Mg(2+) binding site. Residues Thr-184–Gln-254 form a small ATPAse domain (RuvB-S) region. The segment at Pro-257–Val-335 is head domain (RuvB-H). Arg-293, Arg-312, and Arg-317 together coordinate DNA.

Belongs to the RuvB family. In terms of assembly, homohexamer. Forms an RuvA(8)-RuvB(12)-Holliday junction (HJ) complex. HJ DNA is sandwiched between 2 RuvA tetramers; dsDNA enters through RuvA and exits via RuvB. An RuvB hexamer assembles on each DNA strand where it exits the tetramer. Each RuvB hexamer is contacted by two RuvA subunits (via domain III) on 2 adjacent RuvB subunits; this complex drives branch migration. In the full resolvosome a probable DNA-RuvA(4)-RuvB(12)-RuvC(2) complex forms which resolves the HJ.

The protein resides in the cytoplasm. It carries out the reaction ATP + H2O = ADP + phosphate + H(+). In terms of biological role, the RuvA-RuvB-RuvC complex processes Holliday junction (HJ) DNA during genetic recombination and DNA repair, while the RuvA-RuvB complex plays an important role in the rescue of blocked DNA replication forks via replication fork reversal (RFR). RuvA specifically binds to HJ cruciform DNA, conferring on it an open structure. The RuvB hexamer acts as an ATP-dependent pump, pulling dsDNA into and through the RuvAB complex. RuvB forms 2 homohexamers on either side of HJ DNA bound by 1 or 2 RuvA tetramers; 4 subunits per hexamer contact DNA at a time. Coordinated motions by a converter formed by DNA-disengaged RuvB subunits stimulates ATP hydrolysis and nucleotide exchange. Immobilization of the converter enables RuvB to convert the ATP-contained energy into a lever motion, pulling 2 nucleotides of DNA out of the RuvA tetramer per ATP hydrolyzed, thus driving DNA branch migration. The RuvB motors rotate together with the DNA substrate, which together with the progressing nucleotide cycle form the mechanistic basis for DNA recombination by continuous HJ branch migration. Branch migration allows RuvC to scan DNA until it finds its consensus sequence, where it cleaves and resolves cruciform DNA. This is Holliday junction branch migration complex subunit RuvB from Listeria innocua serovar 6a (strain ATCC BAA-680 / CLIP 11262).